A 90-amino-acid chain; its full sequence is Putative beta-neurotoxin RjAa2f (90 aa).

Residues Met1–Cys18 form the signal peptide. The LCN-type CS-alpha/beta domain maps to Lys19–Gly89. Intrachain disulfides connect Cys29–Cys88, Cys33–Cys62, Cys40–Cys69, and Cys44–Cys71.

It belongs to the long (4 C-C) scorpion toxin superfamily. Sodium channel inhibitor family. Beta subfamily. As to expression, expressed by the venom gland.

Its subcellular location is the secreted. Its function is as follows. Beta toxins bind voltage-independently at site-4 of sodium channels (Nav) and shift the voltage of activation toward more negative potentials thereby affecting sodium channel activation and promoting spontaneous and repetitive firing. The sequence is that of Putative beta-neurotoxin RjAa2f from Rhopalurus junceus (Caribbean blue scorpion).